A 370-amino-acid polypeptide reads, in one-letter code: Phospho-N-acetylmuramoyl-pentapeptide-transferase (370 aa).

10 helical membrane-spanning segments follow: residues 24-44 (YLTF…VAMG), 78-98 (TMGG…WADL), 103-123 (VWVV…DDYA), 138-158 (KLVA…LFAP), 177-197 (ALVI…IAGF), 209-229 (GLAI…AYLV), 245-265 (GVGE…GFLW), 273-293 (IFMG…IAVC), 298-318 (LVLG…MIQV), and 347-367 (TVVI…LATL).

It belongs to the glycosyltransferase 4 family. MraY subfamily. Requires Mg(2+) as cofactor.

The protein localises to the cell inner membrane. The enzyme catalyses UDP-N-acetyl-alpha-D-muramoyl-L-alanyl-gamma-D-glutamyl-meso-2,6-diaminopimeloyl-D-alanyl-D-alanine + di-trans,octa-cis-undecaprenyl phosphate = di-trans,octa-cis-undecaprenyl diphospho-N-acetyl-alpha-D-muramoyl-L-alanyl-D-glutamyl-meso-2,6-diaminopimeloyl-D-alanyl-D-alanine + UMP. Its pathway is cell wall biogenesis; peptidoglycan biosynthesis. In terms of biological role, catalyzes the initial step of the lipid cycle reactions in the biosynthesis of the cell wall peptidoglycan: transfers peptidoglycan precursor phospho-MurNAc-pentapeptide from UDP-MurNAc-pentapeptide onto the lipid carrier undecaprenyl phosphate, yielding undecaprenyl-pyrophosphoryl-MurNAc-pentapeptide, known as lipid I. This is Phospho-N-acetylmuramoyl-pentapeptide-transferase from Caulobacter vibrioides (strain NA1000 / CB15N) (Caulobacter crescentus).